A 126-amino-acid chain; its full sequence is Holo-[acyl-carrier-protein] synthase (126 aa).

Mg(2+) contacts are provided by Asp9 and Glu58.

It belongs to the P-Pant transferase superfamily. AcpS family. Mg(2+) serves as cofactor.

It localises to the cytoplasm. The enzyme catalyses apo-[ACP] + CoA = holo-[ACP] + adenosine 3',5'-bisphosphate + H(+). Functionally, transfers the 4'-phosphopantetheine moiety from coenzyme A to a Ser of acyl-carrier-protein. The sequence is that of Holo-[acyl-carrier-protein] synthase from Photobacterium profundum (strain SS9).